Here is a 446-residue protein sequence, read N- to C-terminus: N-succinylarginine dihydrolase (446 aa).

Residues 19 to 28 (SGLSYGNVAS), Asn110, and 137 to 138 (HR) contribute to the substrate site. The active site involves Glu174. Residue Arg214 coordinates substrate. His250 is a catalytic residue. The substrate site is built by Asp252 and Asn363. Cys369 serves as the catalytic Nucleophile.

Belongs to the succinylarginine dihydrolase family. As to quaternary structure, homodimer.

It catalyses the reaction N(2)-succinyl-L-arginine + 2 H2O + 2 H(+) = N(2)-succinyl-L-ornithine + 2 NH4(+) + CO2. It participates in amino-acid degradation; L-arginine degradation via AST pathway; L-glutamate and succinate from L-arginine: step 2/5. Catalyzes the hydrolysis of N(2)-succinylarginine into N(2)-succinylornithine, ammonia and CO(2). This chain is N-succinylarginine dihydrolase, found in Hahella chejuensis (strain KCTC 2396).